The sequence spans 299 residues: Non-structural protein V (299 aa).

A disordered region spans residues 41 to 99; sequence DNPGQERATCREEKAGSSGLSKPCLSAIGSTEGGAPRIRGQGPGESDDDAETLGIPPRN. The tract at residues 110 to 120 is interaction with host STAT1; it reads YYVYDHSGEAV. The segment covering 134–145 has biased composition (low complexity); sequence GLDGDSTLSGGD. Residues 134–168 are disordered; the sequence is GLDGDSTLSGGDNESENSDVDIGEPDTEGYAITDR. The span at 146-160 shows a compositional bias: acidic residues; sequence NESENSDVDIGEPDT. The Zn(2+) site is built by histidine 232, cysteine 251, cysteine 255, cysteine 267, cysteine 269, cysteine 272, cysteine 276, and cysteine 279.

Belongs to the paramyxoviruses V protein family. As to quaternary structure, interacts with host IFIH1/MDA5 and DHX58/LGP2; these interactions are involved in the inhibition of the host type I interferon signaling pathway. Interacts with host TYK2; this interaction inhibits the type I interferon signaling pathway without affecting the type II pathway. Interacts with host IRF7; this interaction inhibits IRF7 translocation to the nucleus. Interacts with host CHUK. Interacts with host RELA/p65; this interaction inhibits the nuclear translocation of NF-KappaB. Interacts (via N-terminus) with host STAT1 and JAK1; these interactions inhibit STAT1 phosphorylation by Jak1 and thereby the type I interferon signaling pathway. Interacts (via C-terminus) with host STAT2; this interaction is involved in the inhibition of the host type I interferon signaling pathway. Forms a complex with host PPP1CA and PPP1CC; this interaction prevents dephosphorylation of host IFIH1/MDA5 and leads to the inhibition of the host type I interferon signaling pathway. Interacts with host IRF9; this interaction prevents the binding of IRF9 to STAT2 and thereby the type I interferon signaling pathway. Interacts with host RIGI regulatory protein (via CARDs domain) and host TRIM25 (via SPRY domain); these interactions prevent TRIM25-mediated ubiquitination of RIG-I and disrupts downstream RIG-I signaling.

It is found in the host cytoplasm. Functionally, plays an essential role in the inhibition of host immune response. Prevents the establishment of cellular antiviral state by blocking interferon-alpha/beta (IFN-alpha/beta) production and signaling pathway. Interacts with host IFIH1/MDA5 and DHX58/LGP2 to inhibit the transduction pathway involved in the activation of IFN-beta promoter, thus protecting the virus against cell antiviral state. Blocks the type I interferon signaling pathway by interacting with host TYK2 and thereby inhibiting downstream STAT1 and STAT2 phosphorylation. Blocks the type I interferon signaling pathway by disrupting the RIG-I signaling pathway. Moderately affects the type II interferon signaling. Prevents PP1alpha/gamma-mediated dephosphorylation of host IFIH1/MDA5 and thus blocks its activation. The sequence is that of Non-structural protein V (P/V) from Measles virus (strain Edmonston) (MeV).